Reading from the N-terminus, the 391-residue chain is Phosphoglycerate kinase (391 aa).

Substrate is bound by residues 21 to 23, arginine 36, 59 to 62, arginine 113, and arginine 146; these read DMN and HLGR. ATP contacts are provided by residues lysine 197, glutamate 319, and 345 to 348; that span reads GGDT.

The protein belongs to the phosphoglycerate kinase family. As to quaternary structure, monomer.

It is found in the cytoplasm. It carries out the reaction (2R)-3-phosphoglycerate + ATP = (2R)-3-phospho-glyceroyl phosphate + ADP. It functions in the pathway carbohydrate degradation; glycolysis; pyruvate from D-glyceraldehyde 3-phosphate: step 2/5. The polypeptide is Phosphoglycerate kinase (Chromobacterium violaceum (strain ATCC 12472 / DSM 30191 / JCM 1249 / CCUG 213 / NBRC 12614 / NCIMB 9131 / NCTC 9757 / MK)).